The chain runs to 506 residues: Probable malate:quinone oxidoreductase (506 aa).

This sequence belongs to the MQO family. The cofactor is FAD.

The catalysed reaction is (S)-malate + a quinone = a quinol + oxaloacetate. It functions in the pathway carbohydrate metabolism; tricarboxylic acid cycle; oxaloacetate from (S)-malate (quinone route): step 1/1. This chain is Probable malate:quinone oxidoreductase, found in Rhodococcus jostii (strain RHA1).